We begin with the raw amino-acid sequence, 660 residues long: Zeaxanthin epoxidase, chloroplastic (660 aa).

The N-terminal 49 residues, 1-49, are a transit peptide targeting the chloroplast; the sequence is MYASSARDGIPGKWCNARRKQLPLLISKDFPAELYHSLPCKSLENGHIK. Residues 79 to 107 and 357 to 370 contribute to the FAD site; these read KVLV…LVFE and TFSW…LLGD. The FHA domain occupies 545-609; sequence LVLSRDENMP…HGTWFIDNEG (65 aa).

FAD is required as a cofactor.

It is found in the plastid. It localises to the chloroplast membrane. The protein localises to the chloroplast thylakoid membrane. It carries out the reaction all-trans-zeaxanthin + 4 reduced [2Fe-2S]-[ferredoxin] + 2 O2 + 4 H(+) = all-trans-violaxanthin + 4 oxidized [2Fe-2S]-[ferredoxin] + 2 H2O. The enzyme catalyses all-trans-zeaxanthin + 2 reduced [2Fe-2S]-[ferredoxin] + O2 + 2 H(+) = all-trans-antheraxanthin + 2 oxidized [2Fe-2S]-[ferredoxin] + H2O. The catalysed reaction is all-trans-antheraxanthin + 2 reduced [2Fe-2S]-[ferredoxin] + O2 + 2 H(+) = all-trans-violaxanthin + 2 oxidized [2Fe-2S]-[ferredoxin] + H2O. It catalyses the reaction beta-cryptoxanthin + 2 reduced [2Fe-2S]-[ferredoxin] + O2 + 2 H(+) = (5R,6S)-5,6-epoxi-beta-cryptoxanthin + 2 oxidized [2Fe-2S]-[ferredoxin] + H2O. The protein operates within plant hormone biosynthesis; abscisate biosynthesis. Its function is as follows. Converts zeaxanthin into antheraxanthin and subsequently violaxanthin. Also acts on beta-cryptoxanthin. Involved in the epoxidation of zeaxanthin. The polypeptide is Zeaxanthin epoxidase, chloroplastic (Capsicum annuum (Capsicum pepper)).